A 374-amino-acid chain; its full sequence is Chaperone protein DnaJ (374 aa).

A J domain is found at 5 to 70 (DYYEVLGVAR…NKRRMYDSHG (66 aa)). Residues 130-207 (GVERRIEIPT…CHGNGRVEED (78 aa)) form a CR-type zinc finger. Positions 143, 146, 159, 162, 181, 184, 195, and 198 each coordinate Zn(2+). CXXCXGXG motif repeat units lie at residues 143–150 (CGDCDGSG), 159–166 (CNVCHGRG), 181–188 (CHNCGGRG), and 195–202 (CKTCHGNG).

It belongs to the DnaJ family. As to quaternary structure, homodimer. Zn(2+) serves as cofactor.

It localises to the cytoplasm. Participates actively in the response to hyperosmotic and heat shock by preventing the aggregation of stress-denatured proteins and by disaggregating proteins, also in an autonomous, DnaK-independent fashion. Unfolded proteins bind initially to DnaJ; upon interaction with the DnaJ-bound protein, DnaK hydrolyzes its bound ATP, resulting in the formation of a stable complex. GrpE releases ADP from DnaK; ATP binding to DnaK triggers the release of the substrate protein, thus completing the reaction cycle. Several rounds of ATP-dependent interactions between DnaJ, DnaK and GrpE are required for fully efficient folding. Also involved, together with DnaK and GrpE, in the DNA replication of plasmids through activation of initiation proteins. In Stenotrophomonas maltophilia (strain K279a), this protein is Chaperone protein DnaJ.